Reading from the N-terminus, the 275-residue chain is Cytochrome c oxidase subunit 3 (275 aa).

7 helical membrane-spanning segments follow: residues proline 22–phenylalanine 42, serine 52–phenylalanine 72, glycine 96–phenylalanine 116, proline 132–leucine 152, alanine 173–isoleucine 193, phenylalanine 211–valine 231, and isoleucine 253–tryptophan 273.

It belongs to the cytochrome c oxidase subunit 3 family. Component of the cytochrome c oxidase (complex IV, CIV), a multisubunit enzyme composed of a catalytic core of 3 subunits and several supernumerary subunits. The complex exists as a monomer or a dimer and forms supercomplexes (SCs) in the inner mitochondrial membrane with ubiquinol-cytochrome c oxidoreductase (cytochrome b-c1 complex, complex III, CIII).

The protein resides in the mitochondrion inner membrane. It catalyses the reaction 4 Fe(II)-[cytochrome c] + O2 + 8 H(+)(in) = 4 Fe(III)-[cytochrome c] + 2 H2O + 4 H(+)(out). Its function is as follows. Component of the cytochrome c oxidase, the last enzyme in the mitochondrial electron transport chain which drives oxidative phosphorylation. The respiratory chain contains 3 multisubunit complexes succinate dehydrogenase (complex II, CII), ubiquinol-cytochrome c oxidoreductase (cytochrome b-c1 complex, complex III, CIII) and cytochrome c oxidase (complex IV, CIV), that cooperate to transfer electrons derived from NADH and succinate to molecular oxygen, creating an electrochemical gradient over the inner membrane that drives transmembrane transport and the ATP synthase. Cytochrome c oxidase is the component of the respiratory chain that catalyzes the reduction of oxygen to water. Electrons originating from reduced cytochrome c in the intermembrane space (IMS) are transferred via the dinuclear copper A center (CU(A)) of subunit 2 and heme A of subunit 1 to the active site in subunit 1, a binuclear center (BNC) formed by heme A3 and copper B (CU(B)). The BNC reduces molecular oxygen to 2 water molecules using 4 electrons from cytochrome c in the IMS and 4 protons from the mitochondrial matrix. This is Cytochrome c oxidase subunit 3 (COX3) from Mycosarcoma maydis (Corn smut fungus).